Here is a 364-residue protein sequence, read N- to C-terminus: Fructose-bisphosphate aldolase C-A (364 aa).

Substrate contacts are provided by Arg-56 and Lys-147. Glu-188 serves as the catalytic Proton acceptor. Lys-230 acts as the Schiff-base intermediate with dihydroxyacetone-P in catalysis.

The protein belongs to the class I fructose-bisphosphate aldolase family. In terms of assembly, homotetramer. In terms of tissue distribution, expressed specifically in Purkinje cells in the brain.

The catalysed reaction is beta-D-fructose 1,6-bisphosphate = D-glyceraldehyde 3-phosphate + dihydroxyacetone phosphate. It functions in the pathway carbohydrate degradation; glycolysis; D-glyceraldehyde 3-phosphate and glycerone phosphate from D-glucose: step 4/4. The sequence is that of Fructose-bisphosphate aldolase C-A from Danio rerio (Zebrafish).